A 185-amino-acid chain; its full sequence is MSKEVLSKSKEKMEKAEQALTRQLGTIRAGRANASLLDRLTVDYYGAATPVNQMASISVPEARMLLITPYDKTILGEIEKAILKSDLGLTPNNDGSVLRLSIPQLTEERRKELVKEVKKEAEEAKVAVRNIRREANEDLKKLEKNGDITEDDLRSYGEDVQKLTDESIKNIDSITKDKEAEILEV.

It belongs to the RRF family.

The protein resides in the cytoplasm. Responsible for the release of ribosomes from messenger RNA at the termination of protein biosynthesis. May increase the efficiency of translation by recycling ribosomes from one round of translation to another. The protein is Ribosome-recycling factor of Listeria innocua serovar 6a (strain ATCC BAA-680 / CLIP 11262).